The primary structure comprises 190 residues: dCTP deaminase, dUMP-forming (190 aa).

DCTP-binding positions include 101–106 (KSSLGR), Asp119, 127–129 (TLE), Gln148, Tyr162, and Gln174. Residue Glu129 is the Proton donor/acceptor of the active site. The tract at residues 161-190 (PYGSSGVGSKYQGQRGPTPSRSYQNFIRST) is disordered. A compositionally biased stretch (polar residues) spans 171–190 (YQGQRGPTPSRSYQNFIRST).

Belongs to the dCTP deaminase family. Homotrimer.

The enzyme catalyses dCTP + 2 H2O = dUMP + NH4(+) + diphosphate. It participates in pyrimidine metabolism; dUMP biosynthesis; dUMP from dCTP: step 1/1. Functionally, bifunctional enzyme that catalyzes both the deamination of dCTP to dUTP and the hydrolysis of dUTP to dUMP without releasing the toxic dUTP intermediate. The protein is dCTP deaminase, dUMP-forming of Mycobacterium marinum (strain ATCC BAA-535 / M).